Consider the following 249-residue polypeptide: 3-deoxy-manno-octulosonate cytidylyltransferase (249 aa).

This sequence belongs to the KdsB family.

It localises to the cytoplasm. The enzyme catalyses 3-deoxy-alpha-D-manno-oct-2-ulosonate + CTP = CMP-3-deoxy-beta-D-manno-octulosonate + diphosphate. The protein operates within nucleotide-sugar biosynthesis; CMP-3-deoxy-D-manno-octulosonate biosynthesis; CMP-3-deoxy-D-manno-octulosonate from 3-deoxy-D-manno-octulosonate and CTP: step 1/1. It participates in bacterial outer membrane biogenesis; lipopolysaccharide biosynthesis. Its function is as follows. Activates KDO (a required 8-carbon sugar) for incorporation into bacterial lipopolysaccharide in Gram-negative bacteria. This Serratia proteamaculans (strain 568) protein is 3-deoxy-manno-octulosonate cytidylyltransferase.